A 378-amino-acid polypeptide reads, in one-letter code: ATP phosphoribosyltransferase regulatory subunit (378 aa).

Belongs to the class-II aminoacyl-tRNA synthetase family. HisZ subfamily. As to quaternary structure, heteromultimer composed of HisG and HisZ subunits.

The protein resides in the cytoplasm. Its pathway is amino-acid biosynthesis; L-histidine biosynthesis; L-histidine from 5-phospho-alpha-D-ribose 1-diphosphate: step 1/9. Required for the first step of histidine biosynthesis. May allow the feedback regulation of ATP phosphoribosyltransferase activity by histidine. This is ATP phosphoribosyltransferase regulatory subunit from Brucella abortus (strain 2308).